The chain runs to 72 residues: Translation initiation factor IF-1 (72 aa).

Residues 1–72 (MTKEEAIEVD…SRGRIMFRER (72 aa)) enclose the S1-like domain.

This sequence belongs to the IF-1 family. In terms of assembly, component of the 30S ribosomal translation pre-initiation complex which assembles on the 30S ribosome in the order IF-2 and IF-3, IF-1 and N-formylmethionyl-tRNA(fMet); mRNA recruitment can occur at any time during PIC assembly.

It localises to the cytoplasm. One of the essential components for the initiation of protein synthesis. Stabilizes the binding of IF-2 and IF-3 on the 30S subunit to which N-formylmethionyl-tRNA(fMet) subsequently binds. Helps modulate mRNA selection, yielding the 30S pre-initiation complex (PIC). Upon addition of the 50S ribosomal subunit IF-1, IF-2 and IF-3 are released leaving the mature 70S translation initiation complex. This Treponema pallidum (strain Nichols) protein is Translation initiation factor IF-1.